Consider the following 347-residue polypeptide: GMP reductase (347 aa).

Residue alanine 108–alanine 131 participates in NADP(+) binding. Residues glycine 181 and glycine 183 each contribute to the K(+) site. Residue cysteine 186 is the Thioimidate intermediate of the active site. Residue isoleucine 216 to valine 239 coordinates NADP(+).

Belongs to the IMPDH/GMPR family. GuaC type 1 subfamily. Homotetramer.

The catalysed reaction is IMP + NH4(+) + NADP(+) = GMP + NADPH + 2 H(+). Its function is as follows. Catalyzes the irreversible NADPH-dependent deamination of GMP to IMP. It functions in the conversion of nucleobase, nucleoside and nucleotide derivatives of G to A nucleotides, and in maintaining the intracellular balance of A and G nucleotides. This Escherichia coli O139:H28 (strain E24377A / ETEC) protein is GMP reductase.